The primary structure comprises 1321 residues: Lysine-specific demethylase 3A (1321 aa).

A phosphoserine mark is found at Ser-264 and Ser-325. Disordered stretches follow at residues 307 to 336, 383 to 402, and 438 to 472; these read ATPP…IPQG, LTEP…QENR, and KHLE…GKKV. The segment covering 316-327 has biased composition (polar residues); the sequence is QQSTPQAANSPP. A Phosphoserine modification is found at Ser-445. A C6-type zinc finger spans residues 662 to 687; that stretch reads CDVCDTTIFNLHWVCPRCGFGVCVDC. Residue Ser-766 is modified to Phosphoserine. Residues 885 to 889 carry the LXXLL motif motif; that stretch reads LRNLL. Lys-895 is subject to N6-acetyllysine. Positions 1058–1281 constitute a JmjC domain; sequence MPSRFDDLMA…HCFWLTQEFR (224 aa). Residues His-1120, Asp-1122, and His-1249 each coordinate Fe cation.

Belongs to the JHDM2 histone demethylase family. Interacts with VRK1. Requires Fe(2+) as cofactor.

It localises to the cytoplasm. The protein localises to the nucleus. The catalysed reaction is N(6),N(6)-dimethyl-L-lysyl(9)-[histone H3] + 2 2-oxoglutarate + 2 O2 = L-lysyl(9)-[histone H3] + 2 formaldehyde + 2 succinate + 2 CO2. Its function is as follows. Histone demethylase that specifically demethylates 'Lys-9' of histone H3, thereby playing a central role in histone code. Preferentially demethylates mono- and dimethylated H3 'Lys-9' residue, with a preference for dimethylated residue, while it has weak or no activity on trimethylated H3 'Lys-9'. Demethylation of Lys residue generates formaldehyde and succinate. Involved in hormone-dependent transcriptional activation, by participating in recruitment to androgen-receptor target genes, resulting in H3 'Lys-9' demethylation and transcriptional activation. Involved in spermatogenesis by regulating expression of target genes such as PRM1 and TNP1 which are required for packaging and condensation of sperm chromatin. Involved in obesity resistance through regulation of metabolic genes such as PPARA and UCP1. This chain is Lysine-specific demethylase 3A (KDM3A), found in Homo sapiens (Human).